Consider the following 509-residue polypeptide: ATP synthase subunit alpha, mitochondrial (509 aa).

171-178 provides a ligand contact to ATP; the sequence is GDRQTGKT.

Belongs to the ATPase alpha/beta chains family. F-type ATPases have 2 components, CF(1) - the catalytic core - and CF(0) - the membrane proton channel. CF(1) has five subunits: alpha(3), beta(3), gamma(1), delta(1), epsilon(1). CF(0) has three main subunits: a, b and c.

It is found in the mitochondrion. The protein resides in the mitochondrion inner membrane. Functionally, mitochondrial membrane ATP synthase (F(1)F(0) ATP synthase or Complex V) produces ATP from ADP in the presence of a proton gradient across the membrane which is generated by electron transport complexes of the respiratory chain. F-type ATPases consist of two structural domains, F(1) - containing the extramembraneous catalytic core, and F(0) - containing the membrane proton channel, linked together by a central stalk and a peripheral stalk. During catalysis, ATP synthesis in the catalytic domain of F(1) is coupled via a rotary mechanism of the central stalk subunits to proton translocation. Subunits alpha and beta form the catalytic core in F(1). Rotation of the central stalk against the surrounding alpha(3)beta(3) subunits leads to hydrolysis of ATP in three separate catalytic sites on the beta subunits. Subunit alpha does not bear the catalytic high-affinity ATP-binding sites. This Oryza sativa subsp. indica (Rice) protein is ATP synthase subunit alpha, mitochondrial (ATPA).